Reading from the N-terminus, the 156-residue chain is Arginine repressor (156 aa).

The protein belongs to the ArgR family.

It is found in the cytoplasm. It participates in amino-acid biosynthesis; L-arginine biosynthesis [regulation]. Regulates arginine biosynthesis genes. The protein is Arginine repressor of Proteus mirabilis (strain HI4320).